The following is a 1124-amino-acid chain: Phytochrome A1 (1124 aa).

Over residues 1–14 the composition is skewed to low complexity; the sequence is MSSSRPSQSSTTSA. A disordered region spans residues 1-20; that stretch reads MSSSRPSQSSTTSARSKHSA. A GAF domain is found at 218-401; it reads SMERLCDTMV…VFAIHVNKEL (184 aa). Cys323 serves as a coordination point for phytochromobilin. Residues 617-687 form the PAS 1 domain; sequence VTAEMVRLIE…KMLELALQGK (71 aa). Residues 690–746 enclose the PAC domain; it reads RNVEFEIKTHGPSGDSSPISLIVNACASRDVGDSVVGVCFIAQDITGQKNIMDKFTR. Residues 747-821 form the PAS 2 domain; it reads IEGDYRAIIQ…KNQEAFVNFG (75 aa). Positions 901–1118 constitute a Histidine kinase domain; that stretch reads YIRRQIRNPL…TFIISVELAV (218 aa).

This sequence belongs to the phytochrome family. As to quaternary structure, homodimer. In terms of processing, contains one covalently linked phytochromobilin chromophore.

In terms of biological role, regulatory photoreceptor which exists in two forms that are reversibly interconvertible by light: the Pr form that absorbs maximally in the red region of the spectrum and the Pfr form that absorbs maximally in the far-red region. Photoconversion of Pr to Pfr induces an array of morphogenic responses, whereas reconversion of Pfr to Pr cancels the induction of those responses. Pfr controls the expression of a number of nuclear genes including those encoding the small subunit of ribulose-bisphosphate carboxylase, chlorophyll A/B binding protein, protochlorophyllide reductase, rRNA, etc. It also controls the expression of its own gene(s) in a negative feedback fashion. The chain is Phytochrome A1 (PHYA1) from Nicotiana tabacum (Common tobacco).